We begin with the raw amino-acid sequence, 388 residues long: Succinate--CoA ligase [ADP-forming] subunit beta (388 aa).

Residues 9 to 245 (KALLKEYGMP…KSQENERELK (237 aa)) form the ATP-grasp domain. ATP is bound by residues K46, 53–55 (GRG), E100, Y103, and E108. N200 and D214 together coordinate Mg(2+). Substrate contacts are provided by residues N265 and 322-324 (GIV).

It belongs to the succinate/malate CoA ligase beta subunit family. Heterotetramer of two alpha and two beta subunits. Mg(2+) serves as cofactor.

The catalysed reaction is succinate + ATP + CoA = succinyl-CoA + ADP + phosphate. It catalyses the reaction GTP + succinate + CoA = succinyl-CoA + GDP + phosphate. Its pathway is carbohydrate metabolism; tricarboxylic acid cycle; succinate from succinyl-CoA (ligase route): step 1/1. In terms of biological role, succinyl-CoA synthetase functions in the citric acid cycle (TCA), coupling the hydrolysis of succinyl-CoA to the synthesis of either ATP or GTP and thus represents the only step of substrate-level phosphorylation in the TCA. The beta subunit provides nucleotide specificity of the enzyme and binds the substrate succinate, while the binding sites for coenzyme A and phosphate are found in the alpha subunit. The protein is Succinate--CoA ligase [ADP-forming] subunit beta of Acinetobacter baumannii (strain AB307-0294).